The following is a 550-amino-acid chain: Metal transporter Nramp3 (550 aa).

Polar residues predominate over residues 1–26 (MSGPMQRSSQPQFISSVERNNQSNGP). The interval 1–30 (MSGPMQRSSQPQFISSVERNNQSNGPGTPL) is disordered. A run of 12 helical transmembrane segments spans residues 50 to 70 (LFSY…PGNF), 83 to 103 (ELLW…SLAA), 127 to 147 (FILW…EVIG), 158 to 178 (IPVW…LLLQ), 185 to 205 (LEFL…VELG), 233 to 253 (ISLL…ALVL), 276 to 296 (AFAL…SGAV), 333 to 353 (LFAV…TYAG), 368 to 390 (WIRN…IIGG), 397 to 417 (LIII…VPLL), 435 to 455 (ISVI…YFLI), and 473 to 493 (VFSG…ILYL). The interval 523-550 (GEGSLGHLPREDISSMQLPQQRTASDLD) is disordered. Residues 536 to 550 (SSMQLPQQRTASDLD) are compositionally biased toward polar residues.

The protein belongs to the NRAMP (TC 2.A.55) family.

Its subcellular location is the membrane. Its function is as follows. Probable metal transporter. This chain is Metal transporter Nramp3 (NRAMP3), found in Oryza sativa subsp. japonica (Rice).